Here is a 274-residue protein sequence, read N- to C-terminus: 2,3,4,5-tetrahydropyridine-2,6-dicarboxylate N-succinyltransferase (274 aa).

Substrate-binding residues include R104 and D141.

Belongs to the transferase hexapeptide repeat family. As to quaternary structure, homotrimer.

It is found in the cytoplasm. The enzyme catalyses (S)-2,3,4,5-tetrahydrodipicolinate + succinyl-CoA + H2O = (S)-2-succinylamino-6-oxoheptanedioate + CoA. It functions in the pathway amino-acid biosynthesis; L-lysine biosynthesis via DAP pathway; LL-2,6-diaminopimelate from (S)-tetrahydrodipicolinate (succinylase route): step 1/3. This is 2,3,4,5-tetrahydropyridine-2,6-dicarboxylate N-succinyltransferase from Citrobacter koseri (strain ATCC BAA-895 / CDC 4225-83 / SGSC4696).